Here is an 88-residue protein sequence, read N- to C-terminus: Small ribosomal subunit protein bS20 (88 aa).

Belongs to the bacterial ribosomal protein bS20 family.

Its function is as follows. Binds directly to 16S ribosomal RNA. The sequence is that of Small ribosomal subunit protein bS20 from Clostridium botulinum (strain 657 / Type Ba4).